The primary structure comprises 344 residues: Autoinducer 2 import system permease protein LsrC (344 aa).

A run of 9 helical transmembrane segments spans residues 13–33 (FFAI…YFIL), 38–58 (MIFA…LVML), 69–89 (TVGL…GLAT), 90–110 (AIAF…LLVV), 114–134 (IPAI…MLLW), 155–175 (FIGV…GGWL), 212–232 (LNGM…GFVP), 251–271 (GISL…AFFL), and 283–303 (LPAW…LVLD). The disordered stretch occupies residues 323-344 (QPGNKGSKQVARFPERKSKEVA). Residues 335-344 (FPERKSKEVA) show a composition bias toward basic and acidic residues.

This sequence belongs to the binding-protein-dependent transport system permease family. AraH/RbsC subfamily. As to quaternary structure, the complex is composed of two ATP-binding proteins (LsrA), two transmembrane proteins (LsrC and LsrD) and a solute-binding protein (LsrB).

It is found in the cell inner membrane. Part of the ABC transporter complex LsrABCD involved in autoinducer 2 (AI-2) import. Probably responsible for the translocation of the substrate across the membrane. This is Autoinducer 2 import system permease protein LsrC (lsrC) from Klebsiella pneumoniae subsp. pneumoniae (strain ATCC 700721 / MGH 78578).